The chain runs to 41 residues: uncharacterized protein (41 aa).

The first 23 residues, 1-23, serve as a signal peptide directing secretion; it reads MNFLMRAIFSLLLLFTLSIPVIS.

This is an uncharacterized protein from Escherichia coli (strain K12).